The chain runs to 83 residues: UPF0248 protein PH1212.1 (83 aa).

This sequence belongs to the UPF0248 family.

In Pyrococcus horikoshii (strain ATCC 700860 / DSM 12428 / JCM 9974 / NBRC 100139 / OT-3), this protein is UPF0248 protein PH1212.1.